An 85-amino-acid chain; its full sequence is Alpha-insect toxin BjaIT (85 aa).

A signal peptide spans 1–19 (MNYLVVICFALLLMTGVES). Residues 21-83 (RDAYIADNLN…VPIRIPGACR (63 aa)) form the LCN-type CS-alpha/beta domain. Disulfide bonds link Cys31–Cys82, Cys35–Cys55, Cys41–Cys65, and Cys45–Cys67. At Arg83 the chain carries Arginine amide.

It belongs to the long (4 C-C) scorpion toxin superfamily. Sodium channel inhibitor family. Alpha subfamily. In terms of tissue distribution, expressed by the venom gland.

The protein resides in the secreted. Alpha toxins bind voltage-independently at site-3 of sodium channels (Nav) and inhibit the inactivation of the activated channels, thereby blocking neuronal transmission. This toxin is active against insects (para/tipE). The chain is Alpha-insect toxin BjaIT from Hottentotta judaicus (Black scorpion).